We begin with the raw amino-acid sequence, 24 residues long: U1-poneritoxin-Na1a (24 aa).

Belongs to the non-disulfide-bridged peptide (NDBP) superfamily. Medium-length antimicrobial peptide (group 3) family. Ponericin-W subfamily. As to expression, expressed by the venom gland.

The protein resides in the secreted. The protein localises to the target cell membrane. Functionally, has a broad spectrum of activity against both Gram-positive and Gram-negative bacteria and S.cerevisiae. Has insecticidal and hemolytic activities. May act by disrupting the integrity of the bacterial cell membrane. This Neoponera apicalis (Ant) protein is U1-poneritoxin-Na1a.